The following is a 369-amino-acid chain: Histone deacetylase-like amidohydrolase (369 aa).

The active-site Proton donor/acceptor is His143. Zn(2+) contacts are provided by Asp180, His182, and Asp268.

The protein belongs to the histone deacetylase family. As to quaternary structure, homotetramer; dimer of dimers. The cofactor is Zn(2+).

With respect to regulation, zinc, and cobalt and nickel at a lesser extent, are able to increase the catalytic activity (2.2-, 1.3- and 1.1-fold respectively) at concentrations of 1 mM. Higher concentrations have an inhibitory effect. Magnesium, manganese and calcium have no effect on activity at concentrations between 0 and 10 mM. At 100 mM, the catalytic activity is increased between 1.2- and 2.1-fold. Hydroxamates like TSA and SAHA inhibit the enzyme. Is also inhibited by azobenzenes, stilbenes and arylazopyrazoles. Its function is as follows. Exhibits significant levels of protein deacetylase activity comparable to those of eukaryotic HDACs in assays both with fluorogenic peptidic substrates and acetate-radiolabeled histones. Accepts proteins with epsilon-acetylated lysine residues and tritiated-acetate-prelabeled chicken histones as substrates. The natural substrate protein is not yet known. This is Histone deacetylase-like amidohydrolase (hdaH) from Alcaligenes sp. (strain DSM 11172) (Bordetella sp. (strain FB188)).